A 769-amino-acid chain; its full sequence is Probable beta-glucosidase M (769 aa).

Positions 1 to 22 are cleaved as a signal peptide; it reads MHSNVGLAGLAGLLATASVCLS. N-linked (GlcNAc...) asparagine glycans are attached at residues asparagine 28, asparagine 75, and asparagine 262. Residue aspartate 290 is part of the active site. Asparagine 318, asparagine 325, asparagine 396, asparagine 437, asparagine 510, asparagine 546, and asparagine 625 each carry an N-linked (GlcNAc...) asparagine glycan.

The protein belongs to the glycosyl hydrolase 3 family.

It localises to the secreted. It catalyses the reaction Hydrolysis of terminal, non-reducing beta-D-glucosyl residues with release of beta-D-glucose.. It participates in glycan metabolism; cellulose degradation. Its function is as follows. Beta-glucosidases are one of a number of cellulolytic enzymes involved in the degradation of cellulosic biomass. Catalyzes the last step releasing glucose from the inhibitory cellobiose. This is Probable beta-glucosidase M (bglM) from Aspergillus fumigatus (strain CBS 144.89 / FGSC A1163 / CEA10) (Neosartorya fumigata).